The sequence spans 82 residues: Small ribosomal subunit protein bS16 (82 aa).

It belongs to the bacterial ribosomal protein bS16 family.

This Marinomonas sp. (strain MWYL1) protein is Small ribosomal subunit protein bS16.